Consider the following 323-residue polypeptide: Olfactory receptor 6T1 (323 aa).

Residues 1 to 25 (MNPENWTQVTSFVLLGFPSSHLIQF) are Extracellular-facing. Asparagine 5 is a glycosylation site (N-linked (GlcNAc...) asparagine). A helical membrane pass occupies residues 26–46 (LVFLGLMVTYIVTATGKLLII). The Cytoplasmic portion of the chain corresponds to 47–54 (VLSWIDQR). Residues 55–75 (LHIQMYFFLRNFSFLELLLVT) traverse the membrane as a helical segment. The Extracellular segment spans residues 76-99 (VVVPKMLVVILTGDHTISFVSCII). Cysteine 97 and cysteine 189 are joined by a disulfide. Residues 100–120 (QSYLYFFLGTTDFFLLAVMSL) form a helical membrane-spanning segment. At 121–139 (DRYLAICRPLRYETLMNGH) the chain is on the cytoplasmic side. The helical transmembrane segment at 140 to 160 (VCSQLVLASWLAGFLWVLCPT) threads the bilayer. At 161 to 197 (VLMASLPFCGPNGIDHFFRDSWPLLRLSCGDTHLLKL) the chain is on the extracellular side. Residues 198–217 (VAFMLSTLVLLGSLALTSVS) form a helical membrane-spanning segment. Residues 218–237 (YACILATVLRAPTAAERRKA) lie on the Cytoplasmic side of the membrane. The helical transmembrane segment at 238 to 258 (FSTCASHLTVVVIIYGSSIFL) threads the bilayer. The Extracellular segment spans residues 259 to 271 (YIRMSEAQSKLLN). A helical membrane pass occupies residues 272 to 292 (KGASVLSCIITPLLNPFIFTL). At 293–323 (RNDKVQQALREALGWPRLTAVMKLRVTSQRK) the chain is on the cytoplasmic side.

This sequence belongs to the G-protein coupled receptor 1 family.

The protein localises to the cell membrane. Functionally, odorant receptor. The sequence is that of Olfactory receptor 6T1 (OR6T1) from Homo sapiens (Human).